A 153-amino-acid polypeptide reads, in one-letter code: MVSRVILNLQLVCANTQGIPANNKIKLWIKKIFFSSKKKIELTIRIVDIQEMLYLNWYYLGKKYPTNVLSFPFEPPSEIQTSLLGDIVICKQIIEYENRKNNIFSDVHWAHMIIHGSLHLLGYDHICDEDAELMNAMELNIIRTLGYKTCCFL.

Zn(2+) contacts are provided by His-115, His-119, and His-125.

Belongs to the endoribonuclease YbeY family. Zn(2+) is required as a cofactor.

Its subcellular location is the cytoplasm. Single strand-specific metallo-endoribonuclease involved in late-stage 70S ribosome quality control and in maturation of the 3' terminus of the 16S rRNA. This Blochmanniella floridana protein is Endoribonuclease YbeY.